The following is a 309-amino-acid chain: Serine/threonine-protein phosphatase 2A catalytic subunit beta isoform (309 aa).

Mn(2+) is bound by residues Asp-57, His-59, Asp-85, and Asn-117. The active-site Proton donor is the His-118. Mn(2+) is bound by residues His-167 and His-241. Tyr-307 carries the phosphotyrosine modification. Residue Leu-309 is modified to Leucine methyl ester.

It belongs to the PPP phosphatase family. PP-1 subfamily. As to quaternary structure, PP2A consists of a common heterodimeric core enzyme (composed of a 36 kDa catalytic subunit (subunit C) and a 65 kDa constant regulatory subunit (PR65) (subunit A)) that associates with a variety of regulatory subunits. Proteins that associate with the core dimer include three families of regulatory subunits B (the R2/B/PR55/B55, R3/B''/PR72/PR130/PR59 and R5/B'/B56 families), the 48 kDa variable regulatory subunit, viral proteins, and cell signaling molecules. Binds PPME1. May indirectly interact with SGO1, most probably through regulatory B56 subunits. Interacts with CTTNBP2NL. Interacts with PTPA. Found in a complex with at least ARL2, PPP2CB, PPP2R1A, PPP2R2A, PPP2R5E and TBCD. Interacts with TBCD. Part of the core of STRIPAK complexes composed of PP2A catalytic and scaffolding subunits, the striatins (PP2A regulatory subunits), the striatin-associated proteins MOB4, STRIP1 and STRIP2, PDCD10 and members of the STE20 kinases, such as STK24 and STK26. Requires Mn(2+) as cofactor. Post-translationally, reversibly methyl esterified on Leu-309 by leucine carboxyl methyltransferase 1 (Lcmt1) and protein phosphatase methylesterase 1 (Ppme1). Carboxyl methylation influences the affinity of the catalytic subunit for the different regulatory subunits, thereby modulating the PP2A holoenzyme's substrate specificity, enzyme activity and cellular localization. Phosphorylation of either threonine (by autophosphorylation-activated protein kinase) or tyrosine results in inactivation of the phosphatase. Auto-dephosphorylation has been suggested as a mechanism for reactivation. In terms of processing, may be monoubiquitinated by NOSIP.

The protein resides in the cytoplasm. It localises to the nucleus. The protein localises to the chromosome. It is found in the centromere. Its subcellular location is the cytoskeleton. The protein resides in the spindle pole. The enzyme catalyses O-phospho-L-seryl-[protein] + H2O = L-seryl-[protein] + phosphate. The catalysed reaction is O-phospho-L-threonyl-[protein] + H2O = L-threonyl-[protein] + phosphate. Catalytic subunit of protein phosphatase 2A (PP2A), a serine/threonine phosphatase involved in the regulation of a wide variety of enzymes, signal transduction pathways, and cellular events. PP2A can modulate the activity of phosphorylase B kinase, casein kinase 2, mitogen-stimulated S6 kinase, and MAP-2 kinase. Part of the striatin-interacting phosphatase and kinase (STRIPAK) complexes. STRIPAK complexes have critical roles in protein (de)phosphorylation and are regulators of multiple signaling pathways including Hippo, MAPK, nuclear receptor and cytoskeleton remodeling. Different types of STRIPAK complexes are involved in a variety of biological processes such as cell growth, differentiation, apoptosis, metabolism and immune regulation. The protein is Serine/threonine-protein phosphatase 2A catalytic subunit beta isoform (Ppp2cb) of Mus musculus (Mouse).